Here is a 715-residue protein sequence, read N- to C-terminus: Palmitoyltransferase ZDHHC5 (715 aa).

Residues 1 to 13 (MPAESGKRFKPSK) are Cytoplasmic-facing. A helical membrane pass occupies residues 14 to 34 (YVPVSAAAIFLVGATTLFFAF). Residues 35–52 (TCPGLSLDVSPAVPIYNA) lie on the Extracellular side of the membrane. Residues 53 to 73 (IMFLFVLANFSMATFMDPGIF) form a helical membrane-spanning segment. The Cytoplasmic portion of the chain corresponds to 74–148 (PRAEEDEDKE…NCIGRRNYRY (75 aa)). Tyrosine 91 is subject to Phosphotyrosine. Residues 104-154 (KWCATCRFYRPPRCSHCSVCDNCVEEFDHHCPWVNNCIGRRNYRYFFLFLL) enclose the DHHC domain. Cysteine 134 (S-palmitoyl cysteine intermediate) is an active-site residue. Residues 149–169 (FFLFLLSLTAHIMGVFGFGLL) traverse the membrane as a helical segment. Residues 170–191 (YVLCHIEELSGVRTAVTMAVMC) lie on the Extracellular side of the membrane. Residues 192–212 (VAGLFFIPVAGLTGFHVVLVA) traverse the membrane as a helical segment. Over 213-715 (RGRTTNEQVT…VGGTTYEISV (503 aa)) the chain is Cytoplasmic. The residue at position 247 (serine 247) is a Phosphoserine. The segment at 289–715 (GELRRTKSKG…VGGTTYEISV (427 aa)) is disordered. The residue at position 294 (threonine 294) is a Phosphothreonine. Residues serine 296 and serine 299 each carry the phosphoserine modification. A Phosphothreonine modification is found at threonine 303. At serine 345 the chain carries Phosphoserine. A phosphothreonine mark is found at threonine 348 and threonine 350. The segment covering 359–373 (SSSSTSAAMPHSSSA) has biased composition (low complexity). Phosphoserine is present on residues serine 380, serine 398, serine 406, and serine 409. Position 411 is a phosphothreonine (threonine 411). Phosphoserine occurs at positions 415, 425, 429, and 432. A compositionally biased stretch (low complexity) spans 422 to 432 (SSGSRSSSLKS). Phosphothreonine is present on threonine 436. The span at 442–478 (QLQSIRSEGTTSTSYKSLANQTRNGSLSYDSLLTPSD) shows a compositional bias: polar residues. Phosphoserine occurs at positions 529 and 554. Positions 581-597 (PRTSSSSDDSKRSPLSK) are enriched in low complexity. Arginine 617 is subject to Omega-N-methylarginine. Position 621 is a phosphoserine (serine 621). Threonine 659 is subject to Phosphothreonine. Over residues 666–677 (LKTTYSKSNGQP) the composition is skewed to polar residues. Phosphoserine is present on residues serine 684 and serine 694. At arginine 697 the chain carries Omega-N-methylarginine.

The protein belongs to the DHHC palmitoyltransferase family. ERF2/ZDHHC9 subfamily. Post-translationally, autopalmitoylated. Palmitoylation of the C-terminal tail regulates stimulation-dependent plasma membrane motility. Phosphorylation regulates association with endocytic proteins and its subcellular localization. Phosphorylation by LYN during fatty acid uptake leads to inactivation of the activity.

It is found in the cell membrane. It carries out the reaction L-cysteinyl-[protein] + hexadecanoyl-CoA = S-hexadecanoyl-L-cysteinyl-[protein] + CoA. Its function is as follows. Palmitoyltransferase that catalyzes the addition of palmitate onto various protein substrates such as CTNND2, CD36, GSDMD, NLRP3, NOD1, NOD2, STAT3 and S1PR1 thus plays a role in various biological processes including cell adhesion, inflammation, fatty acid uptake, bacterial sensing or cardiac functions. Plays an important role in the regulation of synapse efficacy by mediating palmitoylation of delta-catenin/CTNND2, thereby increasing synaptic delivery and surface stabilization of alpha-amino-3-hydroxy-5-methyl-4-isoxazole propionic acid receptors (AMPARs). Under basal conditions, remains at the synaptic membrane through FYN-mediated phosphorylation that prevents association with endocytic proteins. Neuronal activity enhances the internalization and trafficking of DHHC5 from spines to dendritic shafts where it palmitoylates delta-catenin/CTNND2. Regulates cell adhesion at the plasma membrane by palmitoylating GOLGA7B and DSG2. Plays a role in innate immune response by mediating the palmitoylation of NOD1 and NOD2 and their proper recruitment to the bacterial entry site and phagosomes. Also participates in fatty acid uptake by palmitoylating CD36 and thereby targeting it to the plasma membrane. Upon binding of fatty acids to CD36, gets phosphorylated by LYN leading to inactivation and subsequent CD36 caveolar endocytosis. Controls oligodendrocyte development by catalyzing STAT3 palmitoylation. Acts as a regulator of inflammatory response by mediating palmitoylation of NLRP3 and GSDMD. Palmitoylates NLRP3 to promote inflammasome assembly and activation. Activates pyroptosis by catalyzing palmitoylation of gasdermin-D (GSDMD), thereby promoting membrane translocation and pore formation of GSDMD. The protein is Palmitoyltransferase ZDHHC5 (Zdhhc5) of Rattus norvegicus (Rat).